Reading from the N-terminus, the 300-residue chain is Small ribosomal subunit protein uS2 (300 aa).

Residues 228-300 (RAGLSADKDA…PAAEAPSTEA (73 aa)) form a disordered region. Over residues 258-300 (AAPAAEAAPAAEAAPAAEAAPAAEAQAAPAAEAPAAEAPSTEA) the composition is skewed to low complexity.

This sequence belongs to the universal ribosomal protein uS2 family.

This is Small ribosomal subunit protein uS2 from Rhodococcus jostii (strain RHA1).